The primary structure comprises 310 residues: Beta-ketoacyl-[acyl-carrier-protein] synthase III 1 (310 aa).

Residues Cys112 and His235 contribute to the active site. An ACP-binding region spans residues 236-240 (QANIR). Asn265 is a catalytic residue.

This sequence belongs to the thiolase-like superfamily. FabH family. As to quaternary structure, homodimer.

The protein resides in the cytoplasm. It carries out the reaction malonyl-[ACP] + acetyl-CoA + H(+) = 3-oxobutanoyl-[ACP] + CO2 + CoA. The protein operates within lipid metabolism; fatty acid biosynthesis. In terms of biological role, catalyzes the condensation reaction of fatty acid synthesis by the addition to an acyl acceptor of two carbons from malonyl-ACP. Catalyzes the first condensation reaction which initiates fatty acid synthesis and may therefore play a role in governing the total rate of fatty acid production. Possesses both acetoacetyl-ACP synthase and acetyl transacylase activities. Its substrate specificity determines the biosynthesis of branched-chain and/or straight-chain of fatty acids. The sequence is that of Beta-ketoacyl-[acyl-carrier-protein] synthase III 1 from Bacillus cereus (strain ATCC 14579 / DSM 31 / CCUG 7414 / JCM 2152 / NBRC 15305 / NCIMB 9373 / NCTC 2599 / NRRL B-3711).